Consider the following 849-residue polypeptide: Leucine--tRNA ligase (849 aa).

A 'HIGH' region motif is present at residues 44–54; sequence PYPSGRIHMGH. Positions 620-624 match the 'KMSKS' region motif; sequence KMSKS. Lys-623 serves as a coordination point for ATP.

Belongs to the class-I aminoacyl-tRNA synthetase family.

It is found in the cytoplasm. The enzyme catalyses tRNA(Leu) + L-leucine + ATP = L-leucyl-tRNA(Leu) + AMP + diphosphate. The polypeptide is Leucine--tRNA ligase (Sphingopyxis alaskensis (strain DSM 13593 / LMG 18877 / RB2256) (Sphingomonas alaskensis)).